The primary structure comprises 479 residues: Lactaldehyde dehydrogenase (479 aa).

L150 is an NAD(+) binding site. Position 161 (R161) interacts with (S)-lactate. NAD(+) is bound by residues 176 to 179 (KPSE), Q214, and S230. E251 is a binding site for (S)-lactate. Residues E251 and C285 contribute to the active site. (S)-lactate is bound at residue N286. An NAD(+)-binding site is contributed by R336. (S)-lactate is bound by residues E443 and H449.

This sequence belongs to the aldehyde dehydrogenase family. Homotetramer.

The enzyme catalyses (S)-lactaldehyde + NAD(+) + H2O = (S)-lactate + NADH + 2 H(+). It carries out the reaction glycolaldehyde + NAD(+) + H2O = glycolate + NADH + 2 H(+). Its pathway is carbohydrate degradation; L-fucose degradation. The protein operates within carbohydrate degradation; L-rhamnose degradation. With respect to regulation, substrate inhibition is very strong with lactaldehyde, diminishing progressively with glycolaldehyde, glyceraldehyde or methylglyoxal. Inhibited by p-hydroxy mercuribenzoate and by some cations, including Mn(2+), Ca(2+), Cu(2+) and Zn(2+). Inhibited by NADH. Its function is as follows. Catalyzes the irreversible oxidation of L-lactaldehyde to L-lactate. Also shows high activity with glycolaldehyde and L-glyceraldehyde. Has weaker activity with various aldehydes such as methylglyoxal, propionaldehyde or benzaldehyde. Involved in the degradation of lactaldehyde produced during metabolism of L-fucose and L-rhamnose. It may be involved in several other metabolic pathways. The sequence is that of Lactaldehyde dehydrogenase (aldA) from Escherichia coli (strain K12).